The following is a 91-amino-acid chain: Parbolysin P6 (91 aa).

Intrachain disulfides connect Cys-16–Cys-37, Cys-22–Cys-33, and Cys-47–Cys-60.

Belongs to the worm cytolysin family. Localized within the skin and proboscis and are most readily isolated from body mucus secretions.

The protein resides in the secreted. Functionally, cytolysin that shows hemolytic activity (on bovine erythrocytes, HC(50)=5.75 mg/ml). This hemolytic activity is completely inhibited by small unilamelar vesicles composed of PC/PG, PC/PI and PC/PS in 1:1 molar ratios (with at least 100 mg/ml concentration). This chain is Parbolysin P6, found in Parborlasia corrugatus (Antarctic nemertean worm).